We begin with the raw amino-acid sequence, 843 residues long: MAKPLTDSEKRKQISVRGLAGLGDVAEVRKSFNRHLHFTLVKDRNVATPRDYLFALAHTVRDHLVGRWIRTQQHYYERDPKRIYYLSLEFYMGRTLQNTMVNLGLQNACDEAIYQLGLDLEELEEIEEDAGLGNGGLGRLAACFLDSMATLGLAAYGYGIRYEFGIFNQKIVNGWQVEEADDWLRYGNPWEKARPEYMLPVHFYGRVEHTPDGVKWLDTQVVLAMPYDTPVPGYKNNTVNTMRLWSAKAPNDFKLQDFNVGDYIEAVLDRNLAENISRVLYPNDNFFEGKELRLKQEYFVVAATLQDIIRRFKSSKFGCRDPVRTCFETFPDKVAIQLNDTHPALSIPELMRILVDVEKVDWDKAWEITKKTCAYTNHTVLPEALERWPVSMFEKLLPRHLEIIYAINQRHLDHVAALFPGDVDRLRRMSVIEEGDCKRINMAHLCVIGSHAVNGVARIHSEIVKQSVFKDFYELEPEKFQNKTNGITPRRWLLLCNPGLADTIVEKIGEEFLTDLSQLKKLLPLVNDEVFIRDVAKVKQENKLKFSAFLEKEYKVKINPSSMFDVHVKRIHEYKRQLLNCLHVVTLYNRIKRDPAKAFVPRTVMIGGKAAPGYHMAKLIIKLVTSIGDVVNHDPVVGDRLKVIFLENYRVSLAEKVIPAADLSQQISTAGAEASGTGNMKFMLNGALTIGTMDGANVEMAEEAGAENLFIFGLQVEDVEALDRKGYNAREYYDHLPELKQAVDQISSGFFSPKEPNCFKDIVNMLMHHDRFKVFADYEAYMQCQAQVDQLYRNPKEWTKKVIRNIACSGKFSSDRTITEYAREIWGVEPSDLQIPPPNVPRD.

The residue at position 2 (Ala2) is an N-acetylalanine. The residue at position 15 (Ser15) is a Phosphoserine; by PHK; in form phosphorylase A. AMP-binding residues include Asp43, Tyr197, and Arg310. Tyr197 carries the phosphotyrosine modification. Tyr473 is subject to Phosphotyrosine. Lys569 contacts pyridoxal 5'-phosphate. The tract at residues 677–678 is pyridoxal 5'-phosphate; the sequence is TG. Lys681 carries the N6-(pyridoxal phosphate)lysine modification.

Belongs to the glycogen phosphorylase family. In terms of assembly, homodimer. Dimers associate into a tetramer to form the enzymatically active phosphorylase A. Pyridoxal 5'-phosphate serves as cofactor. Post-translationally, phosphorylation of Ser-15 converts phosphorylase B (unphosphorylated) to phosphorylase A.

The catalysed reaction is [(1-&gt;4)-alpha-D-glucosyl](n) + phosphate = [(1-&gt;4)-alpha-D-glucosyl](n-1) + alpha-D-glucose 1-phosphate. With respect to regulation, activity of phosphorylase is controlled both by allosteric means (through the non-covalent binding of metabolites) and by covalent modification. Thus AMP allosterically activates, whereas ATP, ADP, and glucose-6-phosphate allosterically inhibit, phosphorylase B. Its function is as follows. Glycogen phosphorylase that regulates glycogen mobilization. Phosphorylase is an important allosteric enzyme in carbohydrate metabolism. Enzymes from different sources differ in their regulatory mechanisms and in their natural substrates. However, all known phosphorylases share catalytic and structural properties. The sequence is that of Glycogen phosphorylase, brain form (PYGB) from Pongo abelii (Sumatran orangutan).